The following is a 250-amino-acid chain: Ribonuclease PH (250 aa).

Phosphate-binding positions include Arg99 and 137-139 (GTR).

This sequence belongs to the RNase PH family. In terms of assembly, homohexameric ring arranged as a trimer of dimers.

It carries out the reaction tRNA(n+1) + phosphate = tRNA(n) + a ribonucleoside 5'-diphosphate. In terms of biological role, phosphorolytic 3'-5' exoribonuclease that plays an important role in tRNA 3'-end maturation. Removes nucleotide residues following the 3'-CCA terminus of tRNAs; can also add nucleotides to the ends of RNA molecules by using nucleoside diphosphates as substrates, but this may not be physiologically important. Probably plays a role in initiation of 16S rRNA degradation (leading to ribosome degradation) during starvation. The polypeptide is Ribonuclease PH (Bordetella parapertussis (strain 12822 / ATCC BAA-587 / NCTC 13253)).